The chain runs to 107 residues: Putidaredoxin (107 aa).

In terms of domain architecture, 2Fe-2S ferredoxin-type spans 2-106 (SKVVYVSHDG…GIVVDVPDRQ (105 aa)). Positions 40, 46, 49, and 87 each coordinate [2Fe-2S] cluster.

This sequence belongs to the adrenodoxin/putidaredoxin family. Monomer. Requires [2Fe-2S] cluster as cofactor.

The oxidation of camphor by cytochrome P450-CAM requires the participation of a flavoprotein, putidaredoxin reductase, and an iron-sulfur protein, putidaredoxin, to mediate the transfer of electrons from NADH to P450 for oxygen activation. The sequence is that of Putidaredoxin (camB) from Pseudomonas putida (Arthrobacter siderocapsulatus).